The sequence spans 573 residues: Diflavin flavoprotein A 1 (573 aa).

The segment at 43-236 (QNGTTYNSYL…GTISTVANGH (194 aa)) is zinc metallo-hydrolase. His92, Glu94, Asp96, His159, Asp178, and His236 together coordinate Fe cation. Residues 265-401 (VVVFYVADYG…LCDESGTDLG (137 aa)) form the Flavodoxin-like domain. Residues 424-573 (IGRISGGLYI…VHHRKVGNYY (150 aa)) are flavodoxin-reductase-like.

In the N-terminal section; belongs to the zinc metallo-hydrolase group 3 family. It in the C-terminal section; belongs to the flavodoxin reductase family. Homodimer. Fe cation is required as a cofactor. Requires FAD as cofactor. It depends on FMN as a cofactor.

In terms of biological role, mediates electron transfer from NADH to oxygen, reducing it to water. This modular protein has 3 redox cofactors, in other organisms the same activity requires 2 or 3 proteins. This chain is Diflavin flavoprotein A 1 (dfa1), found in Synechocystis sp. (strain ATCC 27184 / PCC 6803 / Kazusa).